A 313-amino-acid chain; its full sequence is Olfactory receptor 1D2 (313 aa).

The Extracellular segment spans residues 1–25 (MDGGNQSEGSEFLLLGMSESPEQQR). Residue Asn-5 is glycosylated (N-linked (GlcNAc...) asparagine). The helical transmembrane segment at 26 to 49 (ILFWMFLSMYLVTVLGNVLIILAI) threads the bilayer. Residues 50 to 57 (SSDSRLHT) lie on the Cytoplasmic side of the membrane. The helical transmembrane segment at 58-79 (PMYFFLANLSFTDLFFVTNTIP) threads the bilayer. The Extracellular segment spans residues 80–100 (KMLVNLQSQDKAISYAGCLTQ). Cys-97 and Cys-189 are disulfide-bonded. The chain crosses the membrane as a helical span at residues 101–120 (LYFLLSLVTLDNLILAVMAY). Residues 121-139 (DRYVAICCPLHYVTAMSPR) are Cytoplasmic-facing. Residues 140-158 (LCILLLSLCWVFSVLYGLI) form a helical membrane-spanning segment. Over 159 to 196 (HTLLMTRVTFCGSRKIHYLFCEMYFLLRLACSNIQINH) the chain is Extracellular. A glycan (N-linked (GlcNAc...) asparagine) is linked at Asn-195. Residues 197-219 (TVLXATGCFIFLIPLGFMIXSYA) traverse the membrane as a helical segment. Topologically, residues 220-236 (RIVRAILRIPSATGKYK) are cytoplasmic. Residues 237-259 (AFSTCASHLAVVSLFYGTLGMVY) form a helical membrane-spanning segment. Topologically, residues 260–271 (LQPLQTYSTKDS) are extracellular. Residues 272–291 (VATVMYAVVTPMMNPFIYSL) traverse the membrane as a helical segment. Residues 292-313 (RNKDIHGALGRLLQGKAFQKLT) are Cytoplasmic-facing.

Belongs to the G-protein coupled receptor 1 family.

It localises to the cell membrane. Odorant receptor. This Pongo pygmaeus (Bornean orangutan) protein is Olfactory receptor 1D2 (OR1D2).